A 314-amino-acid polypeptide reads, in one-letter code: Glucocorticoid receptor (314 aa).

The segment at 1–44 (ASAAVSAAPTEKEFPKTHSDVSSEQQNLKGQKGSNGGSMKLHTT) is disordered. Positions 1-281 (ASAAVSAAPT…SAATGPPPKL (281 aa)) are modulating. Positions 10–21 (TEKEFPKTHSDV) are enriched in basic and acidic residues. A phosphoserine mark is found at serine 65, serine 73, and serine 88. Lysine 120 participates in a covalent cross-link: Glycyl lysine isopeptide (Lys-Gly) (interchain with G-Cter in SUMO2). Serine 129 carries the phosphoserine modification. Glycyl lysine isopeptide (Lys-Gly) (interchain with G-Cter in SUMO); alternate cross-links involve residues lysine 139 and lysine 155. Glycyl lysine isopeptide (Lys-Gly) (interchain with G-Cter in SUMO2); alternate cross-links involve residues lysine 139 and lysine 155. At serine 266 the chain carries Phosphoserine. Residue lysine 280 forms a Glycyl lysine isopeptide (Lys-Gly) (interchain with G-Cter in ubiquitin) linkage. The NR C4-type zinc finger occupies 282–314 (CLVCSDEASGCHYGVLTCGSCKVFFKRAVEGQH). A DNA-binding region (nuclear receptor) is located at residues 282 to 314 (CLVCSDEASGCHYGVLTCGSCKVFFKRAVEGQH).

This sequence belongs to the nuclear hormone receptor family. NR3 subfamily. Heteromultimeric cytoplasmic complex with HSP90AA1, HSPA1A/HSPA1B, and FKBP5 or another immunophilin such as PPID, STIP1, or the immunophilin homolog PPP5C. Upon ligand binding FKBP5 dissociates from the complex and FKBP4 takes its place, thereby linking the complex to dynein and mediating transport to the nucleus, where the complex dissociates. Probably forms a complex composed of chaperones HSP90 and HSP70, co-chaperones CDC37, PPP5C, TSC1 and client protein TSC2, CDK4, AKT, RAF1 and NR3C1; this complex does not contain co-chaperones STIP1/HOP and PTGES3/p23. Directly interacts with UNC45A. Binds to DNA as a homodimer, and as heterodimer with NR3C2 or the retinoid X receptor. Binds STAT5A and STAT5B homodimers and heterodimers. Interacts with NRIP1, POU2F1, POU2F2 and TRIM28. Interacts with several coactivator complexes, including the SMARCA4 complex, CREBBP/EP300, TADA2L (Ada complex) and p160 coactivators such as NCOA2 and NCOA6. Interaction with BAG1 inhibits transactivation. Interacts with HEXIM1 and TGFB1I1. Interacts with NCOA1. Interacts with NCOA3, SMARCA4, SMARCC1, SMARCD1, and SMARCE1. Interacts with CLOCK, CRY1 and CRY2 in a ligand-dependent fashion. Interacts with CIART. Interacts with RWDD3. Interacts with UBE2I/UBC9 and this interaction is enhanced in the presence of RWDD3. Interacts with GRIP1. Interacts with NR4A3 (via nuclear receptor DNA-binding domain), represses transcription activity of NR4A3 on the POMC promoter Nur response element (NurRE). Directly interacts with PNRC2 to attract and form a complex with UPF1 and DCP1A; the interaction leads to rapid mRNA degradation. Interacts with GSK3B. Interacts with FNIP1 and FNIP2. Interacts (via C-terminus) with HNRNPU (via C-terminus). Interacts with MCM3AP. Interacts (via domain NR LBD) with HSP90AA1 and HSP90AB1. In the absence of hormonal ligand, interacts with TACC1. Interacts (via NR LBD domain) with ZNF764 (via KRAB domain); the interaction regulates transcription factor activity of NR3C1 by directing its actions toward certain biologic pathways. Acetylation by CLOCK reduces its binding to glucocorticoid response elements and its transcriptional activity. Post-translationally, increased proteasome-mediated degradation in response to glucocorticoids. In terms of processing, phosphorylated in the absence of hormone; becomes hyperphosphorylated in the presence of glucocorticoid. The Ser-65, Ser-88 and Ser-266-phosphorylated forms are mainly cytoplasmic, and the Ser-73-phosphorylated form is nuclear. Phosphorylation at Ser-73 increases transcriptional activity. Phosphorylation at Ser-65, Ser-88 and Ser-266 decreases signaling capacity. Phosphorylation at Ser-266 may protect from glucocorticoid-induced apoptosis. Phosphorylation at Ser-65 and Ser-73 is not required in regulation of chromosome segregation. May be dephosphorylated by PPP5C, attenuates NR3C1 action. Ubiquitinated by UBR5, leading to its degradation: UBR5 specifically recognizes and binds ligand-bound NR3C1 when it is not associated with coactivators (NCOAs). In presence of NCOAs, the UBR5-degron is not accessible, preventing its ubiquitination and degradation. Post-translationally, sumoylation at Lys-139 and Lys-155 negatively regulates its transcriptional activity. Heat shock increases sumoylation in a RWDD3-dependent manner.

Its subcellular location is the cytoplasm. The protein resides in the nucleus. It localises to the mitochondrion. It is found in the cytoskeleton. The protein localises to the spindle. Its subcellular location is the microtubule organizing center. The protein resides in the centrosome. It localises to the chromosome. It is found in the nucleoplasm. Receptor for glucocorticoids (GC). Has a dual mode of action: as a transcription factor that binds to glucocorticoid response elements (GRE), both for nuclear and mitochondrial DNA, and as a modulator of other transcription factors. Affects inflammatory responses, cellular proliferation and differentiation in target tissues. Involved in chromatin remodeling. Plays a role in rapid mRNA degradation by binding to the 5' UTR of target mRNAs and interacting with PNRC2 in a ligand-dependent manner which recruits the RNA helicase UPF1 and the mRNA-decapping enzyme DCP1A, leading to RNA decay. Could act as a coactivator for STAT5-dependent transcription upon growth hormone (GH) stimulation and could reveal an essential role of hepatic GR in the control of body growth. Mediates glucocorticoid-induced apoptosis. Promotes accurate chromosome segregation during mitosis. May act as a tumor suppressor. May play a negative role in adipogenesis through the regulation of lipolytic and antilipogenic gene expression. This Ovis aries (Sheep) protein is Glucocorticoid receptor (NR3C1).